The primary structure comprises 252 residues: Chaplin-A (252 aa).

An N-terminal signal peptide occupies residues 1 to 20 (MVAAAAATGILSLCGSPALA). One can recognise a Chaplin 1 domain in the interval 31–71 (SPGAVSGNALQVPVDVPVNACGNTVDVIAALNPAFGNECEN). 2 disordered regions span residues 71–121 (NASD…GNNA) and 150–224 (CEND…GSEG). Low complexity predominate over residues 86-108 (EDASSSSSSSTSASSSGSHADGA). The Chaplin 2 domain occupies 112 to 152 (SPGVGSGNNAQVPVDVPVNLCGNTVDVIAALNPVFGNKCEN). Over residues 153–165 (DAEEPPGYGEEEP) the composition is skewed to acidic residues. A compositionally biased stretch (low complexity) spans 210–224 (QTEQPPALAETGSEG). The LPXTG sorting signal motif lies at 217–221 (LAETG). 2 consecutive propeptides (removed by sortase) follow at residues 219 to 252 (ETGSEGTLGAAAAGAVLIAGGAILYRRGRALSGR) and 221 to 252 (GSEGTLGAAAAGAVLIAGGAILYRRGRALSGR). Thr220 is modified (pentaglycyl murein peptidoglycan amidated threonine).

The protein belongs to the chaplin family. Long chaplin subfamily.

It localises to the secreted. It is found in the cell wall. In terms of biological role, one of 8 partially redundant surface-active proteins required for efficient formation of aerial mycelium; the short chaplins assemble into a hydrophobic, amyloidal fibrillar surface layer that envelopes and protects aerial hyphae and spores, presumably anchored to the long chaplins. Chaplins have an overlapping function with the surface-active SapB peptide; chaplins are essential on minimal medium while on rich medium both chaplins and SapB are required for efficient aerial hyphae formation. A minimal chaplin strain capable of forming aerial mycelium/hyphae on minimal medium contains ChpC, ChpE and ChpH. The strain also has restored rodlet formation on the hyphae surface. A second minimal chaplin strain with ChpA, ChpD and ChpE makes slightly less robust hyphae. The long chaplins (ChpA, ChpB, ChpC) are not absolutely necessary for short chaplin localization or rodlet formation, but probably play a role in initiating aerial hyphae development. Chaplins are also involved in cell attachment to a hydrophobic surface. In Streptomyces coelicolor (strain ATCC BAA-471 / A3(2) / M145), this protein is Chaplin-A.